We begin with the raw amino-acid sequence, 716 residues long: Protein C-mannosyl-transferase DPY19L3 (716 aa).

Residues 1 to 43 (MMYIRQRKETKPIEVSEDFPSPKEDVKLEKKLPSGCASGRFWK) are Cytoplasmic-facing. The chain crosses the membrane as a helical span at residues 44–64 (ILSSAVGGTVALCIGLLTSVY). Residues 65-154 (LATLHENDLW…RVLPIQKYLE (90 aa)) lie on the Lumenal side of the membrane. N-linked (GlcNAc...) asparagine glycosylation occurs at Asn118. The helical transmembrane segment at 155-182 (PVYFYIYTLFGLQAVYVTALYITSWLLS) threads the bilayer. Topologically, residues 183 to 184 (GT) are cytoplasmic. Positions 185–197 (WLSGLLAALWYVT) form an intramembrane region, name=3. Over 198–215 (NRIDTTRVEFTIPLRENW) the chain is Cytoplasmic. The segment at residues 216 to 230 (ALPFFAIQIAAITYF) is an intramembrane region (name=4). The Cytoplasmic segment spans residues 231–239 (LRPNLQPLS). The chain crosses the membrane as a helical span at residues 240 to 256 (ERLTLLAIFVSTFLFSL). Residues 257 to 262 (TWQFNQ) lie on the Lumenal side of the membrane. The helical transmembrane segment at 263 to 279 (FMMLLQALVLFILDSLD) threads the bilayer. Topologically, residues 280 to 289 (MLPAMKATWL) are cytoplasmic. A helical transmembrane segment spans residues 290–306 (YGIQISCLLLVCTLQFF). Residues 307 to 308 (NS) lie on the Lumenal side of the membrane. The chain crosses the membrane as a helical span at residues 309-323 (MILGSLLISFNLSVL). The Cytoplasmic portion of the chain corresponds to 324 to 338 (IVRKLQKNLKTGSFL). Residues 339–359 (TRIWKLLLHLLLVFCLTLFLN) form a helical membrane-spanning segment. The Lumenal portion of the chain corresponds to 360–414 (NIIKKVLNLKSDEHIFKFLKAKFGFGATRDFDANLYLCEEAFGLLPLNTFQRLSE). The chain crosses the membrane as a helical span at residues 415 to 437 (TLLFYAYMFVLVVTVVTASVVAF). The Cytoplasmic portion of the chain corresponds to 438–465 (HNLSDSTSLKSMDQTRKRAVDLKPEAAY). The helical transmembrane segment at 466 to 485 (NLIHTILFGVLALSTMRMKY) threads the bilayer. Residues 486–487 (LW) are Lumenal-facing. The helical transmembrane segment at 488-499 (TSHMCVFASFGL) threads the bilayer. At 500–522 (CSSEVWELLLRLVHLCNPKRIWV) the chain is on the cytoplasmic side. The helical transmembrane segment at 523-539 (LRYLVPVLTLLYLCYKS) threads the bilayer. Residues 540 to 716 (WPGVMDELSE…FHVYKLSRNK (177 aa)) are Lumenal-facing. Asn704 carries an N-linked (GlcNAc...) asparagine glycan.

This sequence belongs to the dpy-19 family.

It localises to the endoplasmic reticulum membrane. The catalysed reaction is L-tryptophyl-[protein] + a di-trans,poly-cis-dolichyl beta-D-mannosyl phosphate = C-alpha-D-mannosyl-L-tryptophyl-[protein] + a di-trans,poly-cis-dolichyl phosphate + H(+). It functions in the pathway protein modification; protein glycosylation. In terms of biological role, C-mannosyltransferase that mediates C-mannosylation of tryptophan residues on target proteins. The reaction occurs on the luminal side of the endoplasmic reticulum and involves the transfer of a mannose unit from a dolichylphosphate mannose (Dol-P-Man) donor to an acceptor protein containing a WxxW or WxxC consensus sequence. C-mannosylates RSPO1, a Wnt signaling regulator, preferentially at the first Trp residue in the sequence WxxW. C-mannosylates the netrin receptor UNC5A, preferentially at the third tryptophan of WxxWxxWxxC sequence. The protein is Protein C-mannosyl-transferase DPY19L3 (Dpy19l3) of Mus musculus (Mouse).